The primary structure comprises 365 residues: Ribosomal RNA large subunit methyltransferase F (365 aa).

Residues M1 to P48 are disordered. The span at A33–P48 shows a compositional bias: basic and acidic residues.

Belongs to the methyltransferase superfamily. METTL16/RlmF family.

It localises to the cytoplasm. The enzyme catalyses adenosine(1618) in 23S rRNA + S-adenosyl-L-methionine = N(6)-methyladenosine(1618) in 23S rRNA + S-adenosyl-L-homocysteine + H(+). Its function is as follows. Specifically methylates the adenine in position 1618 of 23S rRNA. The polypeptide is Ribosomal RNA large subunit methyltransferase F (Shewanella baltica (strain OS223)).